Consider the following 208-residue polypeptide: FMN-dependent NADH:quinone oxidoreductase (208 aa).

FMN-binding positions include Ser9 and 15–17; that span reads SHS.

Belongs to the azoreductase type 1 family. As to quaternary structure, homodimer. The cofactor is FMN.

The enzyme catalyses 2 a quinone + NADH + H(+) = 2 a 1,4-benzosemiquinone + NAD(+). The catalysed reaction is N,N-dimethyl-1,4-phenylenediamine + anthranilate + 2 NAD(+) = 2-(4-dimethylaminophenyl)diazenylbenzoate + 2 NADH + 2 H(+). In terms of biological role, quinone reductase that provides resistance to thiol-specific stress caused by electrophilic quinones. Functionally, also exhibits azoreductase activity. Catalyzes the reductive cleavage of the azo bond in aromatic azo compounds to the corresponding amines. This Bordetella petrii (strain ATCC BAA-461 / DSM 12804 / CCUG 43448) protein is FMN-dependent NADH:quinone oxidoreductase.